Reading from the N-terminus, the 166-residue chain is Anterior gradient protein 3 (166 aa).

The signal sequence occupies residues 1-21 (MMLHSALGLCLLLVTVSSNLA). A Prevents secretion from ER motif is present at residues 163 to 166 (QSEL).

Belongs to the AGR family. In terms of assembly, interacts with LYPD3 and DAG1 (alphaDAG1). Expressed in the lung, in the ciliated cells of the airway epithelium. Expression increased with differentiation of airway epithelial cells. Not detected in the mucous cells. Expressed in ciliated cells in the oviduct. Also detected in stomach, colon, prostate and liver. Expressed in breast, ovary, prostate and liver cancer. Expression is associated with the level of differentiation of breast cancer (at protein level).

It localises to the endoplasmic reticulum. Its function is as follows. Required for calcium-mediated regulation of ciliary beat frequency and mucociliary clearance in the airway. Might be involved in the regulation of intracellular calcium in tracheal epithelial cells. This chain is Anterior gradient protein 3 (AGR3), found in Homo sapiens (Human).